Here is a 77-residue protein sequence, read N- to C-terminus: Serine protease inhibitor 3 (77 aa).

Positions 1 to 17 are cleaved as a signal peptide; it reads MMFTPLIVLTLLVLATA. 4 disulfides stabilise this stretch: Cys-21/Cys-53, Cys-30/Cys-48, Cys-33/Cys-44, and Cys-55/Cys-68. One can recognise a TIL domain in the interval 21–74; it reads CGPNEQWSGCPKCELQSGESDKPCATICGEPKCYCSPDKYRRIPDGRCIRKIQC.

The protein resides in the secreted. Defends the organism against the host's proteinases. This chain is Serine protease inhibitor 3, found in Anisakis simplex (Herring worm).